We begin with the raw amino-acid sequence, 952 residues long: Protein translocase subunit SecA (952 aa).

Residues Q104, 122-126 (GEGKT), and D512 each bind ATP.

Belongs to the SecA family. Monomer and homodimer. Part of the essential Sec protein translocation apparatus which comprises SecA, SecYEG and auxiliary proteins SecDF. Other proteins may also be involved.

The protein localises to the cell inner membrane. The protein resides in the cytoplasm. The enzyme catalyses ATP + H2O + cellular proteinSide 1 = ADP + phosphate + cellular proteinSide 2.. In terms of biological role, part of the Sec protein translocase complex. Interacts with the SecYEG preprotein conducting channel. Has a central role in coupling the hydrolysis of ATP to the transfer of proteins into and across the cell membrane, serving as an ATP-driven molecular motor driving the stepwise translocation of polypeptide chains across the membrane. This is Protein translocase subunit SecA from Gloeobacter violaceus (strain ATCC 29082 / PCC 7421).